The sequence spans 547 residues: Cilia- and flagella- associated protein 210 (547 aa).

Residues 184–254 (KLNVEKAFKE…EIEMKKKQGK (71 aa)) are a coiled coil. The interval 210-237 (KDHLKQIKEHEEEEERRRKEEEKDAEEI) is disordered.

As to quaternary structure, microtubule inner protein component of sperm flagellar doublet microtubules. Expressed in trachea multiciliated cells.

The protein resides in the cytoplasm. It localises to the cytoskeleton. It is found in the cilium axoneme. The protein localises to the flagellum axoneme. Its function is as follows. Microtubule inner protein (MIP) part of the dynein-decorated doublet microtubules (DMTs) in cilia axoneme, which is required for motile cilia beating. This Bos taurus (Bovine) protein is Cilia- and flagella- associated protein 210 (CFAP210).